The primary structure comprises 360 residues: Inward rectifier potassium channel 13 (360 aa).

Residues methionine 1–aspartate 50 lie on the Cytoplasmic side of the membrane. The chain crosses the membrane as a helical span at residues methionine 51 to valine 77. Residues leucine 78–serine 105 lie on the Extracellular side of the membrane. Positions phenylalanine 106 to tyrosine 122 form an intramembrane region, helical; Pore-forming. The Selectivity filter signature appears at threonine 119–threonine 124. At glycine 123 to cysteine 131 the chain is on the extracellular side. Residues proline 132 to valine 157 traverse the membrane as a helical segment. Over alanine 158–glutamate 360 the chain is Cytoplasmic. Serine 201 bears the Phosphoserine; by PKC mark. Residue serine 287 is modified to Phosphoserine; by PKA.

This sequence belongs to the inward rectifier-type potassium channel (TC 1.A.2.1) family. KCNJ13 subfamily. In terms of assembly, homotetramer. Post-translationally, phosphorylation at Ser-201 by PKC strongly inhibits ionic currents, while phosphorylation at Ser-287 by PKA increases them.

The protein resides in the membrane. The protein localises to the cell membrane. It catalyses the reaction K(+)(in) = K(+)(out). Inhibited by Ba(2+) and Cs(+), although sensitivity to those inhibitors is much lower than in other Kir channels. Inward rectifier potassium channels are characterized by a greater tendency to allow potassium to flow into the cell rather than out of it. Their voltage dependence is regulated by the concentration of extracellular potassium; as external potassium is raised, the voltage range of the channel opening shifts to more positive voltages. The inward rectification is mainly due to the blockage of outward current by internal magnesium. KCNJ13 has a very low single channel conductance, low sensitivity to block by external barium and cesium, and no dependence of its inward rectification properties on the internal blocking particle magnesium. The sequence is that of Inward rectifier potassium channel 13 (KCNJ13) from Cavia porcellus (Guinea pig).